The following is a 291-amino-acid chain: N-acetylmannosamine kinase (291 aa).

Residues 5–12 (AIDIGGTK) and 132–139 (GVGGGVVS) each bind ATP. Residues H156, C166, C168, and C173 each contribute to the Zn(2+) site.

The protein belongs to the ROK (NagC/XylR) family. NanK subfamily. As to quaternary structure, homodimer.

The catalysed reaction is an N-acyl-D-mannosamine + ATP = an N-acyl-D-mannosamine 6-phosphate + ADP + H(+). It functions in the pathway amino-sugar metabolism; N-acetylneuraminate degradation; D-fructose 6-phosphate from N-acetylneuraminate: step 2/5. Functionally, catalyzes the phosphorylation of N-acetylmannosamine (ManNAc) to ManNAc-6-P. The chain is N-acetylmannosamine kinase from Escherichia coli O1:K1 / APEC.